The sequence spans 432 residues: uncharacterized protein (432 aa).

Residues 1 to 18 (MAIGDKRKKNRKNKQNKK) show a composition bias toward basic residues. 3 disordered regions span residues 1-23 (MAIGDKRKKNRKNKQNKKNKNDN), 37-56 (NSNSLVNSNNKNNNNKNGNG), and 122-168 (STNS…GSSL). 3 stretches are compositionally biased toward low complexity: residues 37 to 53 (NSNSLVNSNNKNNNNKN), 122 to 147 (STNSNNNNNSTNGNSNSPSIIIQQQQ), and 154 to 168 (ESQSSNNNNNNGSSL). Residues 181-226 (LNDQLKIVQLEQKIVNLEKEIQRMRNEQNQIHKQNLNQYHELLKQI) adopt a coiled-coil conformation. Disordered stretches follow at residues 270–290 (VQPVSTPSSSSNSLASKKSNG) and 310–432 (SSKF…STLR). Residues 274–288 (STPSSSSNSLASKKS) show a composition bias toward low complexity. Over residues 311-324 (SKFAQSNSSPSRVN) the composition is skewed to polar residues. Residues 352–378 (KKSATTTTTSSSSNNATTTTAKGSTST) are compositionally biased toward low complexity. Residues 383-414 (ITNSNNIKNSVLSPKSITKPNTPSNIIFSPLS) are compositionally biased toward polar residues.

This is an uncharacterized protein from Dictyostelium discoideum (Social amoeba).